The primary structure comprises 475 residues: Chromosomal replication initiator protein DnaA (475 aa).

The tract at residues 1–71 is domain I, interacts with DnaA modulators; the sequence is MTNDTWNEVR…RQLSAHGAGA (71 aa). The domain II stretch occupies residues 71 to 133; that stretch reads ADRVKFTVSP…PAQPRELPGA (63 aa). A compositionally biased stretch (low complexity) spans 107–127; it reads APAPVHHTAPAPAPVAAPAQP. The tract at residues 107-129 is disordered; that stretch reads APAPVHHTAPAPAPVAAPAQPRE. The tract at residues 134–355 is domain III, AAA+ region; the sequence is KLNPNFTFAN…GALTRLFAFA (222 aa). Positions 178, 180, 181, and 182 each coordinate ATP. Residues 356-475 are domain IV, binds dsDNA; the sequence is DLVRREVTVD…AELLRRTLEA (120 aa).

Belongs to the DnaA family. Oligomerizes as a right-handed, spiral filament on DNA at oriC.

The protein localises to the cytoplasm. Plays an essential role in the initiation and regulation of chromosomal replication. ATP-DnaA binds to the origin of replication (oriC) to initiate formation of the DNA replication initiation complex once per cell cycle. Binds the DnaA box (a 9 base pair repeat at the origin) and separates the double-stranded (ds)DNA. Forms a right-handed helical filament on oriC DNA; dsDNA binds to the exterior of the filament while single-stranded (ss)DNA is stabiized in the filament's interior. The ATP-DnaA-oriC complex binds and stabilizes one strand of the AT-rich DNA unwinding element (DUE), permitting loading of DNA polymerase. After initiation quickly degrades to an ADP-DnaA complex that is not apt for DNA replication. Binds acidic phospholipids. The sequence is that of Chromosomal replication initiator protein DnaA from Jannaschia sp. (strain CCS1).